The chain runs to 28 residues: Peptide 2 (28 aa).

This sequence belongs to the short scorpion toxin superfamily. Potassium channel inhibitor family. Alpha-KTx 09 subfamily. In terms of tissue distribution, expressed by the venom gland.

The protein localises to the secreted. Functionally, blocks potassium channels. This chain is Peptide 2, found in Hottentotta tamulus sindicus (Scorpion).